The following is an 821-amino-acid chain: DNA ligase (821 aa).

Residues Asp-33–Asp-37, Ser-82–Leu-83, and Glu-113 each bind NAD(+). Lys-115 (N6-AMP-lysine intermediate) is an active-site residue. NAD(+) is bound by residues Arg-136, Glu-173, Lys-290, and Lys-314. Zn(2+) contacts are provided by Cys-408, Cys-411, Cys-426, and Cys-432. Residues Ile-741–Glu-821 enclose the BRCT domain.

Belongs to the NAD-dependent DNA ligase family. LigA subfamily. Mg(2+) serves as cofactor. Mn(2+) is required as a cofactor.

It catalyses the reaction NAD(+) + (deoxyribonucleotide)n-3'-hydroxyl + 5'-phospho-(deoxyribonucleotide)m = (deoxyribonucleotide)n+m + AMP + beta-nicotinamide D-nucleotide.. DNA ligase that catalyzes the formation of phosphodiester linkages between 5'-phosphoryl and 3'-hydroxyl groups in double-stranded DNA using NAD as a coenzyme and as the energy source for the reaction. It is essential for DNA replication and repair of damaged DNA. The protein is DNA ligase of Stenotrophomonas maltophilia (strain R551-3).